A 122-amino-acid polypeptide reads, in one-letter code: Large ribosomal subunit protein uL14 (122 aa).

The protein belongs to the universal ribosomal protein uL14 family. As to quaternary structure, part of the 50S ribosomal subunit. Forms a cluster with proteins L3 and L19. In the 70S ribosome, L14 and L19 interact and together make contacts with the 16S rRNA in bridges B5 and B8.

Binds to 23S rRNA. Forms part of two intersubunit bridges in the 70S ribosome. The protein is Large ribosomal subunit protein uL14 of Nitrosococcus oceani (strain ATCC 19707 / BCRC 17464 / JCM 30415 / NCIMB 11848 / C-107).